Reading from the N-terminus, the 137-residue chain is Basic phospholipase A2 homolog Bsc-K49 (137 aa).

Residues 1-16 (MRTLWIVAVLLVGVEG) form the signal peptide. Cystine bridges form between Cys42–Cys131, Cys44–Cys60, Cys59–Cys111, Cys65–Cys137, Cys66–Cys104, Cys73–Cys97, and Cys91–Cys102. An important for membrane-damaging activities in eukaryotes and bacteria; heparin-binding region spans residues 121 to 133 (KNYKITMKMFCKK).

This sequence belongs to the phospholipase A2 family. Group II subfamily. K49 sub-subfamily. As to quaternary structure, homodimer; non-covalently linked. As to expression, expressed by the venom gland.

The protein localises to the secreted. In terms of biological role, snake venom phospholipase A2 that lacks enzymatic activity. Is myotoxic, and displays edema-inducing activities. A model of myotoxic mechanism has been proposed: an apo Lys49-PLA2 is activated by the entrance of a hydrophobic molecule (e.g. fatty acid) at the hydrophobic channel of the protein leading to a reorientation of a monomer. This reorientation causes a transition between 'inactive' to 'active' states, causing alignment of C-terminal and membrane-docking sites (MDoS) side-by-side and putting the membrane-disruption sites (MDiS) in the same plane, exposed to solvent and in a symmetric position for both monomers. The MDoS region stabilizes the toxin on membrane by the interaction of charged residues with phospholipid head groups. Subsequently, the MDiS region destabilizes the membrane with penetration of hydrophobic residues. This insertion causes a disorganization of the membrane, allowing an uncontrolled influx of ions (i.e. calcium and sodium), and eventually triggering irreversible intracellular alterations and cell death. This is Basic phospholipase A2 homolog Bsc-K49 from Bothriechis schlegelii (Eyelash palm pitviper).